A 52-amino-acid chain; its full sequence is Phospholamban (52 aa).

The residue at position 1 (Met-1) is an N-acetylmethionine. Over Met-1 to Leu-31 the chain is Cytoplasmic. Ser-16 bears the Phosphoserine; by PKA mark. A Phosphothreonine; by CaMK2 modification is found at Thr-17. Residues Phe-32 to Leu-52 traverse the membrane as a helical segment. Cys-36 is lipidated: S-palmitoyl cysteine.

This sequence belongs to the phospholamban family. As to quaternary structure, homopentamer. Can also form heterooligomers with other sarcoplasmic/endoplasmic reticulum calcium ATPase (SERCA) regulators ARLN, ERLN, SLN and STRIT1/DWORF. Monomer. Interacts with HAX1. Interacts as a monomer with ATP2A2; the interaction decreases ATP2A2 Ca(2+) affinity. Interacts with VMP1; VMP1 competes with PLN and SLN to prevent them from forming an inhibitory complex with ATP2A2. Interacts with S100A1 in a Ca(2+)-dependent manner. In terms of processing, phosphorylated at Thr-17 by CaMK2, and in response to beta-adrenergic stimulation. Phosphorylation by DMPK may stimulate sarcoplasmic reticulum calcium uptake in cardiomyocytes. Phosphorylation by PKA abolishes the inhibition of ATP2A2-mediated calcium uptake. Palmitoylated by ZDHHC16, promoting formation of the homopentamer. Post-translationally, in elongated spermatids, proteolytically cleaved by SPPL2C which modulates intracellular Ca(2+) homeostasis. In terms of tissue distribution, expressed in testis (at protein level). In brain, expressed specifically in GABAergic GAD67+ neurons of the thalamic reticular nucleus where it colocalizes with ATP2A2/SERCA2 (at protein level). Expressed in the bladder and in the atria and ventricles of the heart.

Its subcellular location is the endoplasmic reticulum membrane. The protein resides in the sarcoplasmic reticulum membrane. The protein localises to the mitochondrion membrane. It is found in the membrane. Reversibly inhibits the activity of ATP2A2/SERCA2 in cardiac sarcoplasmic reticulum by decreasing the apparent affinity of the ATPase for Ca(2+). Binds preferentially to the ATP-bound E1 conformational form of ATP2A2 which predominates at low Ca(2+) concentrations during the diastolic phase of the cardiac cycle. Inhibits ATP2A2 Ca(2+) affinity by disrupting its allosteric activation by ATP. Modulates the contractility of the heart muscle in response to physiological stimuli via its effects on ATP2A2. Modulates calcium re-uptake during muscle relaxation and plays an important role in calcium homeostasis in the heart muscle. The degree of ATP2A2 inhibition depends on the oligomeric state of PLN. ATP2A2 inhibition is alleviated by PLN phosphorylation. Also inhibits the activity of ATP2A3/SERCA3. Controls intracellular Ca(2+) levels in elongated spermatids and may play a role in germ cell differentiation. In the thalamic reticular nucleus of the brain, plays a role in the regulation of sleep patterns and executive functioning. This chain is Phospholamban, found in Mus musculus (Mouse).